A 449-amino-acid polypeptide reads, in one-letter code: Exodeoxyribonuclease 7 large subunit (449 aa).

Belongs to the XseA family. As to quaternary structure, heterooligomer composed of large and small subunits.

The protein localises to the cytoplasm. It carries out the reaction Exonucleolytic cleavage in either 5'- to 3'- or 3'- to 5'-direction to yield nucleoside 5'-phosphates.. Its function is as follows. Bidirectionally degrades single-stranded DNA into large acid-insoluble oligonucleotides, which are then degraded further into small acid-soluble oligonucleotides. This is Exodeoxyribonuclease 7 large subunit from Salmonella agona (strain SL483).